The primary structure comprises 623 residues: MAEEKRQFQAEVGKLLDIVVHSLYSNKEIFLRELISNASDSCDRLRYGAITEPDLLDGDSEFRIRLVPDKDAGTLTIIDNGQGMSHDELIANLGTIAKSGTSEFLARLTGDAKKDVSLIGQFGVGFYSAFMVAEEVTVTSRKAGEAKGWKWVSDGKGEFTVSPAEDAARGAAITLKLREGETEFLDAFRLKSIVKRYSDHIAIPVTLKDADKDEETINSASALWTRSKSEITPEQYKEFYHHVAHAFDEPWSTLHYKAEGAIEYTGLLFIPSSKPLDIFHPDRKQHVKLYVRRVFITDDCEELLPPYLRFVRGVVDSQDLPLNVSREMLQHNPVLSKIRTGLVKRILGELKKKSEDAEGKYDEFWAAFGPVLKEGIYEDFERKTDILELCRFRSTHGDGLTTLADYVARMKDGQDAIYTITGDDLDQLKKSPQLEGFAAKGVEVLLLTDPIDEFWVSAVRSYAEKDFRSVAAAGADLSKVKAPEGAEDKKADEAPADELTTLIEAVKLALGERVKDVRPSERLTESAVCLVAAEGEMSMHLEKMLRAHNQAPGERARILEINPRHALIKGLAARVKAGGTDAGLEDAAFLLLDQARIIEGEPPADPAAFARRMVSVMEKGLLG.

Residues 1-326 (MAEEKRQFQA…SQDLPLNVSR (326 aa)) form an a; substrate-binding region. A b region spans residues 327–543 (EMLQHNPVLS…EGEMSMHLEK (217 aa)). The c stretch occupies residues 544–623 (MLRAHNQAPG…VSVMEKGLLG (80 aa)).

This sequence belongs to the heat shock protein 90 family. Homodimer.

The protein resides in the cytoplasm. In terms of biological role, molecular chaperone. Has ATPase activity. In Paramagnetospirillum magneticum (strain ATCC 700264 / AMB-1) (Magnetospirillum magneticum), this protein is Chaperone protein HtpG.